A 441-amino-acid chain; its full sequence is Signal recognition particle 54 kDa protein (441 aa).

GTP-binding positions include 104-111 (GLQGSGKT), 186-190 (DTAGR), and 244-247 (TKLD).

The protein belongs to the GTP-binding SRP family. SRP54 subfamily. In terms of assembly, part of the signal recognition particle protein translocation system, which is composed of SRP and FtsY. Archaeal SRP consists of a 7S RNA molecule of 300 nucleotides and two protein subunits: SRP54 and SRP19.

It localises to the cytoplasm. The enzyme catalyses GTP + H2O = GDP + phosphate + H(+). Its function is as follows. Involved in targeting and insertion of nascent membrane proteins into the cytoplasmic membrane. Binds to the hydrophobic signal sequence of the ribosome-nascent chain (RNC) as it emerges from the ribosomes. The SRP-RNC complex is then targeted to the cytoplasmic membrane where it interacts with the SRP receptor FtsY. The chain is Signal recognition particle 54 kDa protein from Staphylothermus marinus (strain ATCC 43588 / DSM 3639 / JCM 9404 / F1).